Consider the following 180-residue polypeptide: ATP-dependent protease subunit HslV (180 aa).

Residue Thr-5 is part of the active site. Residues Gly-165, Cys-168, and Thr-171 each contribute to the Na(+) site.

It belongs to the peptidase T1B family. HslV subfamily. In terms of assembly, a double ring-shaped homohexamer of HslV is capped on each side by a ring-shaped HslU homohexamer. The assembly of the HslU/HslV complex is dependent on binding of ATP.

The protein resides in the cytoplasm. The enzyme catalyses ATP-dependent cleavage of peptide bonds with broad specificity.. Its activity is regulated as follows. Allosterically activated by HslU binding. Functionally, protease subunit of a proteasome-like degradation complex believed to be a general protein degrading machinery. The polypeptide is ATP-dependent protease subunit HslV (Helicobacter pylori (strain ATCC 700392 / 26695) (Campylobacter pylori)).